The primary structure comprises 1616 residues: Replicase large subunit (1616 aa).

The methyltransferase stretch occupies residues 50 to 458 (FSKVISEEQT…QSLSMTFYLH (409 aa)). Residues 72–281 (TFYNTQNAVH…HSYSNILKYV (210 aa)) form the Alphavirus-like MT domain. Positions 801–963 (VVYSDMAKLR…KLEVDEVETR (163 aa)) constitute a (+)RNA virus helicase ATP-binding domain. The segment at 830-1085 (LVDGVPGCGK…RHTCSLKYYT (256 aa)) is helicase. Residue 833 to 840 (GVPGCGKT) coordinates ATP. The (+)RNA virus helicase C-terminal domain occupies 964–1116 (RTTLRCPADV…DMYKVDAGTQ (153 aa)). A RdRp catalytic domain is found at 1380–1493 (MDVLELDISK…YFPKGCEFPD (114 aa)).

The protein belongs to the ssRNA positive-strand viruses RNA-directed RNA polymerase family. In terms of assembly, heterodimer of a large and a small subunit.

The catalysed reaction is RNA(n) + a ribonucleoside 5'-triphosphate = RNA(n+1) + diphosphate. The enzyme catalyses ATP + H2O = ADP + phosphate + H(+). Is an RNA-dependent RNA polymerase active in viral RNA replication. Functionally, is a methyltransferase active in RNA capping and an RNA helicase. Methyltransferase displays a cytoplasmic capping enzyme activity. This function is necessary since all viral RNAs are synthesized in the cytoplasm, and host capping enzymes are restricted to the nucleus. Helicase region probably exhibits NTPase and RNA unwinding activities (Potential). It also acts as a suppressor of RNA-mediated gene silencing, also known as post-transcriptional gene silencing (PTGS), a mechanism of plant viral defense that limits the accumulation of viral RNAs. May mediate silencing suppression through either inhibition of HEN1-mediated siRNA or siRNA demethylation. This Nicotiana tabacum (Common tobacco) protein is Replicase large subunit.